Here is a 75-residue protein sequence, read N- to C-terminus: Small ribosomal subunit protein bS18 (75 aa).

It belongs to the bacterial ribosomal protein bS18 family. Part of the 30S ribosomal subunit. Forms a tight heterodimer with protein bS6.

Its function is as follows. Binds as a heterodimer with protein bS6 to the central domain of the 16S rRNA, where it helps stabilize the platform of the 30S subunit. The sequence is that of Small ribosomal subunit protein bS18 from Idiomarina loihiensis (strain ATCC BAA-735 / DSM 15497 / L2-TR).